The following is a 288-amino-acid chain: Cyclin-dependent kinase 2 homolog (288 aa).

The Protein kinase domain maps to 4-284 (YHGLEKIGEG…AKQALEHAYF (281 aa)). ATP contacts are provided by residues 10–18 (IGEGTYGVV) and Lys32. Residue Thr14 is modified to Phosphothreonine. Tyr15 bears the Phosphotyrosine mark. The Proton acceptor role is filled by Asp125. Phosphothreonine is present on Thr158.

It belongs to the protein kinase superfamily. CMGC Ser/Thr protein kinase family. CDC2/CDKX subfamily. As to quaternary structure, may form a complex composed of at least the catalytic subunit CRK2 and a cyclin. Requires Mg(2+) as cofactor.

It localises to the cytoplasm. The enzyme catalyses L-seryl-[protein] + ATP = O-phospho-L-seryl-[protein] + ADP + H(+). The catalysed reaction is L-threonyl-[protein] + ATP = O-phospho-L-threonyl-[protein] + ADP + H(+). It catalyses the reaction [DNA-directed RNA polymerase] + ATP = phospho-[DNA-directed RNA polymerase] + ADP + H(+). Its activity is regulated as follows. Phosphorylation at Thr-14 or Tyr-15 inactivates the enzyme, while phosphorylation at Thr-158 activates it. Its function is as follows. Serine/threonine-protein kinase. Involved in the control of the cell cycle. Required for entry into S-phase and mitosis. Probable component of the kinase complex that phosphorylates the repetitive C-terminus of RNA polymerase II. This is Cyclin-dependent kinase 2 homolog from Plasmodium vivax.